The sequence spans 341 residues: tRNA N6-adenosine threonylcarbamoyltransferase (341 aa).

Positions 120 and 124 each coordinate Fe cation. Substrate-binding positions include 142–146 (VVSGG), aspartate 175, glycine 188, aspartate 192, and asparagine 281. Aspartate 310 lines the Fe cation pocket.

The protein belongs to the KAE1 / TsaD family. Fe(2+) is required as a cofactor.

It localises to the cytoplasm. The catalysed reaction is L-threonylcarbamoyladenylate + adenosine(37) in tRNA = N(6)-L-threonylcarbamoyladenosine(37) in tRNA + AMP + H(+). Required for the formation of a threonylcarbamoyl group on adenosine at position 37 (t(6)A37) in tRNAs that read codons beginning with adenine. Is involved in the transfer of the threonylcarbamoyl moiety of threonylcarbamoyl-AMP (TC-AMP) to the N6 group of A37, together with TsaE and TsaB. TsaD likely plays a direct catalytic role in this reaction. The chain is tRNA N6-adenosine threonylcarbamoyltransferase from Anoxybacillus flavithermus (strain DSM 21510 / WK1).